We begin with the raw amino-acid sequence, 753 residues long: MTTSPGGPETKGRTAEVDINPVSASLEVAGKPGHFNKSLSKGPQTTTWIWNLHALAHDFDTQTNDLEEISRKIFSAHFGHLSIIFVWISGMIFHAARFSNYYAWLADPLGNKPSAHVVWPIVGQDILNADVGNGFRGVQITSGLFHILRGAGMTDPGELYSAAIGALVAAVVMMYAGYYHYHKKAPKLEWFQNAESTMTHHLIVLLGLGNLAWTGHLIHVSLPVNKLLDSGVAPQDIPIPHEFLFDNGFMADLYPSFAQGLMPYFTLNWGAYSDFLTFKGGLDPTTGGLWMTDIAHHHLALAVMYIIAGHMYRTNWGIGHSMKEIMESHKGPFTGEGHKGLYEVLTTSWHAQLAINLATWGSFSIIVAHHMYAMPPYPYLATDYGTQLNLFVHHMWIGGFLIVGGAAHAAIFMVRDYDPAVNQNNVLDRMLRHRDTIISHLNWVCIFLGFHSFGLYIHNDNMRSLGRPQDMFSDTAIQLQPIFSQWVQNLQANVAGTIRAPLAEGASSLAWGGDPLFVGGKVAMQHVSLGTADFMIHHIHAFQIHVTVLILIKGVLYARSSRLIPDKANLGFRFPCDGPGRGGTCQSSGWDHIFLGLFWMYNCISIVNFHFFWKMQSDVWGAANANGGVNYLTAGNWAQSSITINGWLRDFLWAQSVQVINSYGSALSAYGILFLGAHFIWAFSLMFLFSGRGYWQELIESIVWAHSKLKIAPAIQPRAMSITQGRAVGLGHYLLGGIVTSWSFYLARILALG.

The next 8 helical transmembrane spans lie at 73 to 96, 159 to 182, 198 to 222, 294 to 312, 349 to 372, 388 to 414, 436 to 458, and 534 to 552; these read IFSA…FHAA, LYSA…YHYH, MTHH…HVSL, IAHH…GHMY, WHAQ…HHMY, LNLF…IFMV, TIIS…LYIH, and FMIH…LILI. Residues Cys576 and Cys585 each contribute to the [4Fe-4S] cluster site. 2 helical membrane passes run 592–613 and 667–689; these read HIFL…HFFW and LSAY…MFLF. His678 is a chlorophyll a' binding site. Chlorophyll a-binding residues include Met686 and Tyr694. Trp695 lines the phylloquinone pocket. Residues 727–747 form a helical membrane-spanning segment; the sequence is AVGLGHYLLGGIVTSWSFYLA.

The protein belongs to the PsaA/PsaB family. As to quaternary structure, the PsaA/B heterodimer binds the P700 chlorophyll special pair and subsequent electron acceptors. PSI consists of a core antenna complex that captures photons, and an electron transfer chain that converts photonic excitation into a charge separation. The cyanobacterial PSI reaction center is composed of one copy each of PsaA,B,C,D,E,F,I,J,K,L,M and X, and forms trimeric complexes. Requires PSI electron transfer chain: 5 chlorophyll a, 1 chlorophyll a', 2 phylloquinones and 3 4Fe-4S clusters. PSI core antenna: 90 chlorophyll a, 22 carotenoids, 3 phospholipids and 1 galactolipid. P700 is a chlorophyll a/chlorophyll a' dimer, A0 is one or more chlorophyll a, A1 is one or both phylloquinones and FX is a shared 4Fe-4S iron-sulfur center. as cofactor.

It localises to the cellular thylakoid membrane. The enzyme catalyses reduced [plastocyanin] + hnu + oxidized [2Fe-2S]-[ferredoxin] = oxidized [plastocyanin] + reduced [2Fe-2S]-[ferredoxin]. Functionally, psaA and PsaB bind P700, the primary electron donor of photosystem I (PSI), as well as the electron acceptors A0, A1 and FX. PSI is a plastocyanin/cytochrome c6-ferredoxin oxidoreductase, converting photonic excitation into a charge separation, which transfers an electron from the donor P700 chlorophyll pair to the spectroscopically characterized acceptors A0, A1, FX, FA and FB in turn. Oxidized P700 is reduced on the lumenal side of the thylakoid membrane by plastocyanin or cytochrome c6. This is Photosystem I P700 chlorophyll a apoprotein A1 from Acaryochloris marina (strain MBIC 11017).